Reading from the N-terminus, the 702-residue chain is Ribosomal RNA large subunit methyltransferase K/L (702 aa).

The THUMP domain maps to 43–154 (LVYQSLMWSR…KETASIALDL (112 aa)).

The protein belongs to the methyltransferase superfamily. RlmKL family.

Its subcellular location is the cytoplasm. The enzyme catalyses guanosine(2445) in 23S rRNA + S-adenosyl-L-methionine = N(2)-methylguanosine(2445) in 23S rRNA + S-adenosyl-L-homocysteine + H(+). It catalyses the reaction guanosine(2069) in 23S rRNA + S-adenosyl-L-methionine = N(2)-methylguanosine(2069) in 23S rRNA + S-adenosyl-L-homocysteine + H(+). Functionally, specifically methylates the guanine in position 2445 (m2G2445) and the guanine in position 2069 (m7G2069) of 23S rRNA. The chain is Ribosomal RNA large subunit methyltransferase K/L from Escherichia coli O157:H7.